The primary structure comprises 495 residues: uncharacterized protein (495 aa).

It localises to the cytoplasm. The protein resides in the nucleus. This is an uncharacterized protein from Saccharomyces cerevisiae (strain ATCC 204508 / S288c) (Baker's yeast).